The following is a 245-amino-acid chain: 1-(5-phosphoribosyl)-5-[(5-phosphoribosylamino)methylideneamino] imidazole-4-carboxamide isomerase (245 aa).

The active-site Proton acceptor is the Asp7. The active-site Proton donor is Asp129.

The protein belongs to the HisA/HisF family.

The protein localises to the cytoplasm. The enzyme catalyses 1-(5-phospho-beta-D-ribosyl)-5-[(5-phospho-beta-D-ribosylamino)methylideneamino]imidazole-4-carboxamide = 5-[(5-phospho-1-deoxy-D-ribulos-1-ylimino)methylamino]-1-(5-phospho-beta-D-ribosyl)imidazole-4-carboxamide. Its pathway is amino-acid biosynthesis; L-histidine biosynthesis; L-histidine from 5-phospho-alpha-D-ribose 1-diphosphate: step 4/9. The chain is 1-(5-phosphoribosyl)-5-[(5-phosphoribosylamino)methylideneamino] imidazole-4-carboxamide isomerase from Shigella flexneri serotype 5b (strain 8401).